The chain runs to 281 residues: Lectin alpha chain (281 aa).

Asn-35, Asn-82, and Asn-140 each carry an N-linked (GlcNAc...) asparagine glycan.

It belongs to the leguminous lectin family. In terms of assembly, tetramer of 2 alpha and 2 beta chains. Post-translationally, glycosylated. In terms of processing, the beta chain is produced by partial proteolytic processing of the alpha chain.

D-galactose-binding lectin. The sequence is that of Lectin alpha chain from Lablab purpureus (Hyacinth bean).